The primary structure comprises 1475 residues: Sex-determining transformer protein 2 (1475 aa).

The signal sequence occupies residues 1–31; it reads MKLKYNKLLVSVVIVTFVTFGLLLAECFGKS. 11 helical membrane-spanning segments follow: residues 446–466, 474–494, 496–516, 589–609, 737–757, 902–922, 928–948, 952–972, 979–999, 1034–1054, and 1060–1080; these read TIHFVVNVHSLIVILFTIFVW, AFMFFVRDALTCLLFCFVCST, GVIVLDTELIKYIIVLTLANL, WGCTSILIFPIVFVYWYFIDS, GVILCIPAILLIVISIGLLFI, AVGVLYEHYHRIAVVWNLFAF, AGIFIILLSIITFIFAITPTI, FLFSLLVVGTQIEVAALVHLF, IYTNLALFAGFLAAWDPFCAL, IAQFFVLLITAFSILAIICSI, and IFFVPTVILIVIQIVAVFNSI. The tract at residues 1133–1273 is interaction with fem-3; it reads EFSIKRSSPP…RERNLMNKRS (141 aa). 2 disordered regions span residues 1142–1194 and 1267–1330; these read PCRY…GDNT and NLMN…VDEP. Residues 1178–1188 show a composition bias toward basic residues; it reads RSPKTGNKRVR. Residues 1276–1310 show a composition bias toward basic and acidic residues; the sequence is QRRESRNIEKMKKSQENLDKEKSEEKISESKKNQD. The interval 1392–1413 is MX regulatory domain; required for tra-1 binding; it reads CEDIYWTHRTGQLPPGLQVPRR. The disordered stretch occupies residues 1424-1475; it reads TPPPEDLNWVPPAESPPIPIPQQAFDLLEERRRNHREQQDEAREGDLSDPEV. Positions 1451 to 1469 are enriched in basic and acidic residues; that stretch reads LEERRRNHREQQDEAREGD.

In terms of assembly, interacts with tra-1 and fem-3. Post-translationally, undergoes cleavage by tra-3 to produce a feminizing carboxy-terminal isoform Tra-2B. Somatic and germline tissues. Isoform Tra-2B is specific to oocytes.

The protein resides in the membrane. In terms of biological role, plays a major role in controlling sexual cell fates. Promotes female development in XX animals where it sequesters one or more of the FEM proteins to the membrane thereby freeing the tra-1 protein (a putative transcription factor) to enter the nucleus and promote female development. In XO animals it acts as a receptor for her-1 which prevents it from binding to FEM proteins thereby repressing the activity of tra-1. Negatively regulates male development when bound to fem-3 and is required together with tra-1 for promoting spermatogenesis. Also required for feminizing tra-3 activity. The protein is Sex-determining transformer protein 2 (tra-2) of Caenorhabditis elegans.